We begin with the raw amino-acid sequence, 301 residues long: MDLRDIDLNLLVVFNQLLLDRSVSTAGEKLGLTQPAVSNSLKRLRAALKDDLFLRTSKGMEPTPYALHLAEPVIYALNTLQTALTTRDSFDPFASTRTFNLAMTDIGEMYFMPPLMEALAQRAPHIQISTLRPNAGNLKEDMESGAVDLALGLLPELQTGFFQRRLFRHRYVCMFRKDHPSAKSPMSLKQFSELEHVGVVALNTGHGEVDGLLERAGIKRRMRLVVPHFIAIGPILHSTDLIATVPQRFAVRCEVPFGLTTSPHPAKLPDIAINLFWHAKYNRDPGNMWLRQLFVELFSEA.

Positions 6–63 (IDLNLLVVFNQLLLDRSVSTAGEKLGLTQPAVSNSLKRLRAALKDDLFLRTSKGMEPT) constitute an HTH lysR-type domain. Residues 23 to 42 (VSTAGEKLGLTQPAVSNSLK) constitute a DNA-binding region (H-T-H motif).

The protein belongs to the LysR transcriptional regulatory family.

In terms of biological role, may regulate the expression of the naphthalene (nagA-F) and salicylate (nagG-M) metabolism genes. The chain is HTH-type transcriptional activator NagR from Ralstonia sp.